The chain runs to 147 residues: Prefoldin subunit alpha (147 aa).

The protein belongs to the prefoldin alpha subunit family. As to quaternary structure, heterohexamer of two alpha and four beta subunits.

The protein localises to the cytoplasm. Functionally, molecular chaperone capable of stabilizing a range of proteins. Seems to fulfill an ATP-independent, HSP70-like function in archaeal de novo protein folding. In Saccharolobus islandicus (strain Y.N.15.51 / Yellowstone #2) (Sulfolobus islandicus), this protein is Prefoldin subunit alpha.